Consider the following 239-residue polypeptide: Pyridoxine 5'-phosphate synthase (239 aa).

Asn-7 serves as a coordination point for 3-amino-2-oxopropyl phosphate. 9–10 contacts 1-deoxy-D-xylulose 5-phosphate; it reads DH. Arg-18 serves as a coordination point for 3-amino-2-oxopropyl phosphate. His-43 functions as the Proton acceptor in the catalytic mechanism. The 1-deoxy-D-xylulose 5-phosphate site is built by Arg-45 and His-50. Catalysis depends on Glu-70, which acts as the Proton acceptor. 1-deoxy-D-xylulose 5-phosphate is bound at residue Thr-100. His-191 functions as the Proton donor in the catalytic mechanism. 3-amino-2-oxopropyl phosphate contacts are provided by residues Gly-192 and 213-214; that span reads GH.

It belongs to the PNP synthase family. As to quaternary structure, homooctamer; tetramer of dimers.

The protein resides in the cytoplasm. The enzyme catalyses 3-amino-2-oxopropyl phosphate + 1-deoxy-D-xylulose 5-phosphate = pyridoxine 5'-phosphate + phosphate + 2 H2O + H(+). Its pathway is cofactor biosynthesis; pyridoxine 5'-phosphate biosynthesis; pyridoxine 5'-phosphate from D-erythrose 4-phosphate: step 5/5. Catalyzes the complicated ring closure reaction between the two acyclic compounds 1-deoxy-D-xylulose-5-phosphate (DXP) and 3-amino-2-oxopropyl phosphate (1-amino-acetone-3-phosphate or AAP) to form pyridoxine 5'-phosphate (PNP) and inorganic phosphate. This Geobacter metallireducens (strain ATCC 53774 / DSM 7210 / GS-15) protein is Pyridoxine 5'-phosphate synthase.